The chain runs to 101 residues: Small ribosomal subunit protein uS14 (101 aa).

The protein belongs to the universal ribosomal protein uS14 family. In terms of assembly, part of the 30S ribosomal subunit. Contacts proteins S3 and S10.

Its function is as follows. Binds 16S rRNA, required for the assembly of 30S particles and may also be responsible for determining the conformation of the 16S rRNA at the A site. This Janthinobacterium sp. (strain Marseille) (Minibacterium massiliensis) protein is Small ribosomal subunit protein uS14.